Here is a 312-residue protein sequence, read N- to C-terminus: Malate dehydrogenase (312 aa).

Residues 7–13 and Asp-34 each bind NAD(+); that span reads GAAGGIG. Substrate contacts are provided by Arg-81 and Arg-87. Residues Asn-94 and 117-119 each bind NAD(+); that span reads ITN. 2 residues coordinate substrate: Asn-119 and Arg-153. The active-site Proton acceptor is the His-177. NAD(+) is bound at residue Met-227.

This sequence belongs to the LDH/MDH superfamily. MDH type 1 family. Homodimer.

It carries out the reaction (S)-malate + NAD(+) = oxaloacetate + NADH + H(+). Catalyzes the reversible oxidation of malate to oxaloacetate. The chain is Malate dehydrogenase from Escherichia coli O6:K15:H31 (strain 536 / UPEC).